The primary structure comprises 83 residues: Cytochrome c oxidase subunit 7A2, mitochondrial (83 aa).

The transit peptide at 1-23 (MLRNLLALRQIGQRTISTASRRH) directs the protein to the mitochondrion. Residues 24–48 (FKNKVPEKQKLFQEDDEIPLYLKGG) lie on the Mitochondrial matrix side of the membrane. K33 carries the post-translational modification N6-acetyllysine. A helical membrane pass occupies residues 49–77 (VADALLYRATMILTVGGTAYAIYELAVAS). The Mitochondrial intermembrane segment spans residues 78–83 (FPKKQE).

It belongs to the cytochrome c oxidase VIIa family. In terms of assembly, component of the cytochrome c oxidase (complex IV, CIV), a multisubunit enzyme composed of 14 subunits. The complex is composed of a catalytic core of 3 subunits MT-CO1, MT-CO2 and MT-CO3, encoded in the mitochondrial DNA, and 11 supernumerary subunits COX4I1 (or COX4I2), COX5A, COX5B, COX6A1 (or COX6A2), COX6B1 (or COX6B2), COX6C, COX7A2 (or COX7A1), COX7B, COX7C, COX8A and NDUFA4, which are encoded in the nuclear genome. The complex exists as a monomer or a dimer and forms supercomplexes (SCs) in the inner mitochondrial membrane with NADH-ubiquinone oxidoreductase (complex I, CI) and ubiquinol-cytochrome c oxidoreductase (cytochrome b-c1 complex, complex III, CIII), resulting in different assemblies (supercomplex SCI(1)III(2)IV(1) and megacomplex MCI(2)III(2)IV(2)). Interacts with PET100.

The protein localises to the mitochondrion inner membrane. It participates in energy metabolism; oxidative phosphorylation. Functionally, component of the cytochrome c oxidase, the last enzyme in the mitochondrial electron transport chain which drives oxidative phosphorylation. The respiratory chain contains 3 multisubunit complexes succinate dehydrogenase (complex II, CII), ubiquinol-cytochrome c oxidoreductase (cytochrome b-c1 complex, complex III, CIII) and cytochrome c oxidase (complex IV, CIV), that cooperate to transfer electrons derived from NADH and succinate to molecular oxygen, creating an electrochemical gradient over the inner membrane that drives transmembrane transport and the ATP synthase. Cytochrome c oxidase is the component of the respiratory chain that catalyzes the reduction of oxygen to water. Electrons originating from reduced cytochrome c in the intermembrane space (IMS) are transferred via the dinuclear copper A center (CU(A)) of subunit 2 and heme A of subunit 1 to the active site in subunit 1, a binuclear center (BNC) formed by heme A3 and copper B (CU(B)). The BNC reduces molecular oxygen to 2 water molecules using 4 electrons from cytochrome c in the IMS and 4 protons from the mitochondrial matrix. In Homo sapiens (Human), this protein is Cytochrome c oxidase subunit 7A2, mitochondrial (COX7A2).